We begin with the raw amino-acid sequence, 134 residues long: Cytochrome b5 (134 aa).

A Cytochrome b5 heme-binding domain is found at threonine 6–valine 82. Heme-binding residues include histidine 41 and histidine 65. The tract at residues arginine 86–glutamate 105 is disordered. Polar residues predominate over residues threonine 87 to glutamate 105. A helical transmembrane segment spans residues tryptophan 111–glycine 131.

This sequence belongs to the cytochrome b5 family.

Its subcellular location is the endoplasmic reticulum membrane. The protein resides in the microsome membrane. In terms of biological role, cytochrome b5 is a membrane-bound hemoprotein which functions as an electron carrier for several membrane-bound oxygenases. The polypeptide is Cytochrome b5 (Cyt-b5) (Drosophila melanogaster (Fruit fly)).